The chain runs to 145 residues: MTILGIGLDLVTISEFAEQLERTGTTMLRESFTAGERRYCQSKGTDPARSYAARWAAKEAVLKAWASSRFARRPQIGDNPYPLIEVVNDAWGRPSIKLHGLAAEFLPRVRVHLSLTHDGDTAAAMVVLEDPGELADLIEGREATP.

Residues Asp9 and Glu59 each coordinate Mg(2+).

It belongs to the P-Pant transferase superfamily. AcpS family. Requires Mg(2+) as cofactor.

It is found in the cytoplasm. The catalysed reaction is apo-[ACP] + CoA = holo-[ACP] + adenosine 3',5'-bisphosphate + H(+). Transfers the 4'-phosphopantetheine moiety from coenzyme A to a Ser of acyl-carrier-protein. The sequence is that of Holo-[acyl-carrier-protein] synthase from Nocardia farcinica (strain IFM 10152).